The sequence spans 965 residues: Isoleucine--tRNA ligase (965 aa).

Positions proline 68 to histidine 78 match the 'HIGH' region motif. Glutamate 582 is an L-isoleucyl-5'-AMP binding site. The 'KMSKS' region signature appears at lysine 623–serine 627. Lysine 626 provides a ligand contact to ATP. Residues cysteine 936, cysteine 939, cysteine 956, and cysteine 959 each coordinate Zn(2+).

It belongs to the class-I aminoacyl-tRNA synthetase family. IleS type 1 subfamily. In terms of assembly, monomer. Requires Zn(2+) as cofactor.

It is found in the cytoplasm. It carries out the reaction tRNA(Ile) + L-isoleucine + ATP = L-isoleucyl-tRNA(Ile) + AMP + diphosphate. Its function is as follows. Catalyzes the attachment of isoleucine to tRNA(Ile). As IleRS can inadvertently accommodate and process structurally similar amino acids such as valine, to avoid such errors it has two additional distinct tRNA(Ile)-dependent editing activities. One activity is designated as 'pretransfer' editing and involves the hydrolysis of activated Val-AMP. The other activity is designated 'posttransfer' editing and involves deacylation of mischarged Val-tRNA(Ile). This is Isoleucine--tRNA ligase from Prochlorococcus marinus subsp. pastoris (strain CCMP1986 / NIES-2087 / MED4).